The chain runs to 413 residues: Nucleoporin NUP42 (413 aa).

The C3H1-type zinc-finger motif lies at 1 to 25 (MTICQFFLQGRCRFGDRCWNEHPRG). 6 FG repeats span residues 14 to 15 (FG), 79 to 80 (FG), 217 to 218 (FG), 225 to 226 (FG), 269 to 270 (FG), and 313 to 314 (FG). Residues 252–293 (GNAAAVGSSAAASNPPTFGVTSSPSVPNPVGSGNSSAPSAAS) form a disordered region. A compositionally biased stretch (low complexity) spans 321–357 (SSSTAPLPVSATPSAATGTSQSGASSASAAQTAGASG). A disordered region spans residues 321–369 (SSSTAPLPVSATPSAATGTSQSGASSASAAQTAGASGHNVTSAPSAVPN).

As to quaternary structure, probable component of the nuclear pore complex (NPC).

Its subcellular location is the nucleus. The protein localises to the nuclear pore complex. The protein resides in the nucleus membrane. Required for the export of mRNAs containing poly(A) tails from the nucleus into the cytoplasm. The sequence is that of Nucleoporin NUP42 (NUP42) from Gallus gallus (Chicken).